A 245-amino-acid chain; its full sequence is 8-amino-3,8-dideoxy-manno-octulosonate cytidylyltransferase (245 aa).

It belongs to the KdsB family.

The protein localises to the cytoplasm. The enzyme catalyses 8-amino-3,8-dideoxy-alpha-D-manno-octulosonate + CTP = CMP-8-amino-3,8-dideoxy-alpha-D-manno-oct-2-ulosonate + diphosphate. It functions in the pathway bacterial outer membrane biogenesis; lipopolysaccharide biosynthesis. Its function is as follows. Activates KDO8N (a required 8-carbon sugar) for incorporation into bacterial lipopolysaccharide in the Shewanella genus. The sequence is that of 8-amino-3,8-dideoxy-manno-octulosonate cytidylyltransferase from Shewanella sp. (strain W3-18-1).